A 404-amino-acid polypeptide reads, in one-letter code: Type I restriction enzyme EcoR124I/EcoR124II specificity subunit (404 aa).

The interval 1-153 (MSEMSYLEKL…PIPCPDNPEK (153 aa)) is target-recognition domain 1. The conserved region 1 stretch occupies residues 154–199 (SLAIQSEIVRILDKFTALTAELTAELNMRKKQYNYYRDQLLSFKEG). The target-recognition domain 2 stretch occupies residues 200–349 (EVEWKTLGEI…KLFSFKIPVP (150 aa)). The interval 350 to 404 (NINEQQRIVEILDKFDTLTNSITEGLPREIELRQKQYEYYRDLLFSFPKPETVSN) is conserved region 2.

It belongs to the type-I restriction system S methylase family. In terms of assembly, the type I restriction/modification system is composed of three polypeptides R, M and S; the restriction enzyme has stoichiometry R(2)M(2)S(1) while the methyltransferase is M(2)S(1). There is an equilibrium between R(2)M(2)S(1) and R(1)M(2)S(1); the latter is methylation and translocation proficient but restriction deficient. (Microbial infection) Holoenenzyme interacts with Escherichia phage T7 protein Ocr; this interaction leads to the inhibition of the restriction activity, but may still allow methylation and translocation.

Its function is as follows. The specificity (S) subunit of a type I restriction enzyme; this subunit dictates DNA sequence specificity. The presence or absence of a 4-residue repeat changes the sequence specificity; a third copy of TAEL inserted at position 179-180 changes the recognition site from 5'-GAAN(6)RTCG-3' (for EcoR124I) to 5'-GAAN(7)RTCG-3' (for EcoR124II). The M and S subunits together form a methyltransferase (MTase) that methylates A-3 on the top and bottom strand of the sequence 5'-GAAN(7)RTCG-3'. In the presence of the R subunit the complex can also act as an endonuclease, binding to the same target sequence but cutting the DNA some distance from this site. Whether the DNA is cut or modified depends on the methylation state of the target sequence. When the target site is unmodified, the DNA is cut. When the target site is hemimethylated, the complex acts as a maintenance MTase modifying the DNA so that both strands become methylated. After locating a non-methylated recognition site, the enzyme complex serves as a molecular motor that translocates DNA in an ATP-dependent manner until a collision occurs that triggers cleavage. The R(1)M(2)S(1) complex translocates an average of 555 bp/second on nicked DNA; the R(2)M(2)S(1) complex translocates at double that speed. The 2 R subunit motors are independent and track along the helical pitch of the DNA, inducing positive supercoiling ahead of themselves. This Escherichia coli protein is Type I restriction enzyme EcoR124I/EcoR124II specificity subunit (hsdS).